Reading from the N-terminus, the 467-residue chain is Cysteine protease ATG4a (467 aa).

The tract at residues 1–35 (MKALCDRFVPQQCSSSSKSDTHDKSPLVSDSGPSD) is disordered. Cys-170 serves as the catalytic Nucleophile. Active-site residues include Asp-364 and His-366. The tract at residues 448-467 (NYGFADDDSEDEREDDWQML) is disordered. The segment covering 452–467 (ADDDSEDEREDDWQML) has biased composition (acidic residues).

This sequence belongs to the peptidase C54 family. Interacts with ATG8. In terms of tissue distribution, constitutively expressed.

The protein localises to the cytoplasm. The enzyme catalyses [protein]-C-terminal L-amino acid-glycyl-phosphatidylethanolamide + H2O = [protein]-C-terminal L-amino acid-glycine + a 1,2-diacyl-sn-glycero-3-phosphoethanolamine. In terms of biological role, cysteine protease that plays a key role in autophagy by mediating both proteolytic activation and delipidation of ATG8 family proteins. The protease activity is required for proteolytic activation of ATG8 family proteins: cleaves the C-terminal amino acid of ATG8 proteins to reveal a C-terminal glycine. Exposure of the glycine at the C-terminus is essential for ATG8 proteins conjugation to phosphatidylethanolamine (PE) and insertion to membranes, which is necessary for autophagy. In addition to the protease activity, also mediates delipidation of PE-conjugated ATG8 proteins. The protein is Cysteine protease ATG4a of Arabidopsis thaliana (Mouse-ear cress).